The following is a 130-amino-acid chain: Small ribosomal subunit protein uS8 (130 aa).

It belongs to the universal ribosomal protein uS8 family. Part of the 30S ribosomal subunit.

One of the primary rRNA binding proteins, it binds directly to 16S rRNA central domain where it helps coordinate assembly of the platform of the 30S subunit. The protein is Small ribosomal subunit protein uS8 of Methanothermobacter thermautotrophicus (strain ATCC 29096 / DSM 1053 / JCM 10044 / NBRC 100330 / Delta H) (Methanobacterium thermoautotrophicum).